Reading from the N-terminus, the 226-residue chain is 2-dehydro-3-deoxy-phosphogluconate aldolase (226 aa).

Glu-57 serves as the catalytic Proton acceptor. The pyruvate site is built by Arg-61, Thr-85, and Lys-145. Lys-145 serves as the catalytic Schiff-base intermediate with substrate.

The protein belongs to the KHG/KDPG aldolase family. In terms of assembly, homotrimer.

It catalyses the reaction 2-dehydro-3-deoxy-6-phospho-D-gluconate = D-glyceraldehyde 3-phosphate + pyruvate. The protein operates within carbohydrate acid metabolism; 2-dehydro-3-deoxy-D-gluconate degradation; D-glyceraldehyde 3-phosphate and pyruvate from 2-dehydro-3-deoxy-D-gluconate: step 2/2. Its function is as follows. Involved in the degradation of glucose via the Entner-Doudoroff pathway. Catalyzes the reversible, stereospecific retro-aldol cleavage of 2-keto-3-deoxy-6-phosphogluconate (KDPG) to pyruvate and D-glyceraldehyde-3-phosphate. This Pseudomonas putida (Arthrobacter siderocapsulatus) protein is 2-dehydro-3-deoxy-phosphogluconate aldolase.